A 322-amino-acid chain; its full sequence is Putative pyruvyl transferase EpsO (322 aa).

This sequence belongs to the polysaccharide pyruvyl transferase family.

In terms of biological role, may be involved in the production of the exopolysaccharide (EPS) component of the extracellular matrix during biofilm formation. EPS is responsible for the adhesion of chains of cells into bundles. This chain is Putative pyruvyl transferase EpsO (epsO), found in Bacillus subtilis (strain 168).